The sequence spans 967 residues: MNNINKNSQKDRPTYKDTLNLLQTNFGMRANATLREPELQAFWREKNIDFELGLNNTGETFTLHDGPPYANGTLHMGHALNKVLKDIINKFQTMKGKKVCYVPGWDCHGLPIELKVLQAMDKSQRAELTPIKLRKKAAAYAKKQVSQQMDGFKRWGVWGDWDQPYLSLDKKFEASQIKLFGEMVFKGYIYRGLKPVHWSPSSQTALAEAELEYPTGHTSKSIYVGFKVNQIPKRLTQEISKQAPDLINSEGKLKEVKLVIWTTTPWTIPANEAISVNQKLEYVIAQSSDRSLIIIANDLLDEVSKSVGINYEKRVLIKGSILDGIIYKHPLFDKISPVVLGGDYITTESGTGLVHTAPGHGVDDFNTGKKYNLSISCTVDAKGFLTKEAGKYEGLNVLKDANSVIISDLINSGSLLKEIPYEHRYPYDWRTKKPTIFRATEQWFASVEGFRDKALSAIEDVIWLPESGKNRINSMVRERGDWCISRQRTWGVPIPVFYEKNGQEILLNKETISHIADLFSVHGADIWWEYEVSELLPPSYLNQADRWQKGTDTMDVWFDSGSSWSSVISKKENLNYPADLYLEGSDQHRGWFQSSLLTSVAVNEHAPFKKVLTHGFALDENGRKMSKSLGNIIDPLVIINGGSNKKLDPAYGADVLRLWVSSVDYSADVPIGSNILKQISDVYRKVRNTSRYLLGNLYDFDYKIDSIDIANLPLLDKWMLNRTAEVIDEISDAYNNFEFSKFFQTIQNFCVVDLSNFYLDIAKDRLYVSSKSDFRRRSCQTVLSLVIEKISGLIAPVLCHMAEDIWQNIPYDLEEASVFQRGWPNVPKSWRNSSFNCHVTELRKLRAVINRMLESCRNNQALGSSLEASVRVDISDEKVQAAIEWLAESESNNVDVLRDWFLVSSLQIGGEPWAEVLVSEDNDYASVEIAKARGFKCERCWHYEIEMSKNPQHTNICKRCEKVVLAI.

Positions 68 to 78 match the 'HIGH' region motif; that stretch reads PYANGTLHMGH. L-isoleucyl-5'-AMP is bound at residue Glu-583. A 'KMSKS' region motif is present at residues 624–628; sequence KMSKS. Lys-627 contacts ATP. 4 residues coordinate Zn(2+): Cys-937, Cys-940, Cys-957, and Cys-960.

This sequence belongs to the class-I aminoacyl-tRNA synthetase family. IleS type 1 subfamily. Monomer. Requires Zn(2+) as cofactor.

It is found in the cytoplasm. It catalyses the reaction tRNA(Ile) + L-isoleucine + ATP = L-isoleucyl-tRNA(Ile) + AMP + diphosphate. Catalyzes the attachment of isoleucine to tRNA(Ile). As IleRS can inadvertently accommodate and process structurally similar amino acids such as valine, to avoid such errors it has two additional distinct tRNA(Ile)-dependent editing activities. One activity is designated as 'pretransfer' editing and involves the hydrolysis of activated Val-AMP. The other activity is designated 'posttransfer' editing and involves deacylation of mischarged Val-tRNA(Ile). The sequence is that of Isoleucine--tRNA ligase from Prochlorococcus marinus (strain NATL1A).